Reading from the N-terminus, the 281-residue chain is Acetylglutamate kinase (281 aa).

Residues 64-65 (GG), Arg-86, and Asn-179 each bind substrate.

This sequence belongs to the acetylglutamate kinase family. ArgB subfamily.

The protein resides in the cytoplasm. The enzyme catalyses N-acetyl-L-glutamate + ATP = N-acetyl-L-glutamyl 5-phosphate + ADP. Its pathway is amino-acid biosynthesis; L-arginine biosynthesis; N(2)-acetyl-L-ornithine from L-glutamate: step 2/4. Catalyzes the ATP-dependent phosphorylation of N-acetyl-L-glutamate. This chain is Acetylglutamate kinase, found in Campylobacter curvus (strain 525.92).